Reading from the N-terminus, the 533-residue chain is MSIQVEHPAGGYKKLFETVEELSSPLTAHVTGRIPLWLTGSLLRCGPGLFEVGSEPFYHLFDGQALLHKFDFKEGHVTYHRRFIRTDAYVRAMTEKRIVITEFGTCAFPDPCKNIFSRFFSYFRGVEVTDNALVNVYPVGEDYYACTETNFITKINPETLETIKQVDLCNYVSVNGATAHPHIENDGTVYNIGNCFGKNFSIAYNIVKIPPLQADKEDPISKSEVVVQFPCSDRFKPSYVHSFGLTPNYIVFVETPVKINLLKFLSSWSLWGANYMDCFESNETMGVWLHIADKKRKKYLNNKYRTSSFNLFHHINTYEDNEFLIVDLCCWKGFEFVYNYLYLANLRENWEEVKKNARKAPQPEVRRYVLPLNIDKADTGKNLVTLPNTTATATLRSDETIWLEPEVLFSGPRQAFEFPQINYQKSGGKPYTYAYGLGLNHFVPDRLCKLNVKTKETWVWQEPDSYPSEPIFVSHPDALEEDDGVVLSVVVSPGAGQKPAYLLILNAKDLSEVARAEVEINIPVTFHGLFKKS.

Ser-2 carries the N-acetylserine modification. A phosphothreonine mark is found at Thr-101 and Thr-105. Cys-112 is lipidated: S-palmitoyl cysteine; in membrane form. N6-acetyllysine is present on Lys-113. Ser-117 bears the Phosphoserine mark. His-180 lines the Fe cation pocket. A lipid anchor (S-palmitoyl cysteine; in membrane form) is attached at Cys-231. Positions 241 and 313 each coordinate Fe cation. Residues Cys-329 and Cys-330 are each lipidated (S-palmitoyl cysteine; in membrane form). His-527 serves as a coordination point for Fe cation.

It belongs to the carotenoid oxygenase family. As to quaternary structure, interacts with MYO7A; this mediates light-dependent intracellular transport of RPE65. It depends on Fe(2+) as a cofactor. Palmitoylation by LRAT regulates ligand binding specificity; the palmitoylated form (membrane form) specifically binds all-trans-retinyl-palmitate, while the soluble unpalmitoylated form binds all-trans-retinol (vitamin A). Retinal pigment epithelium specific.

The protein resides in the cytoplasm. It is found in the cell membrane. The protein localises to the microsome membrane. The enzyme catalyses an all-trans-retinyl ester + H2O = 11-cis-retinol + a fatty acid + H(+). It carries out the reaction lutein = (3R,3'S)-zeaxanthin. It catalyses the reaction all-trans-retinyl hexadecanoate + H2O = 11-cis-retinol + hexadecanoate + H(+). Functionally, critical isomerohydrolase in the retinoid cycle involved in regeneration of 11-cis-retinal, the chromophore of rod and cone opsins. Catalyzes the cleavage and isomerization of all-trans-retinyl fatty acid esters to 11-cis-retinol which is further oxidized by 11-cis retinol dehydrogenase to 11-cis-retinal for use as visual chromophore. Essential for the production of 11-cis retinal for both rod and cone photoreceptors. Also capable of catalyzing the isomerization of lutein to meso-zeaxanthin an eye-specific carotenoid. The soluble form binds vitamin A (all-trans-retinol), making it available for LRAT processing to all-trans-retinyl ester. The membrane form, palmitoylated by LRAT, binds all-trans-retinyl esters, making them available for IMH (isomerohydrolase) processing to all-cis-retinol. The soluble form is regenerated by transferring its palmitoyl groups onto 11-cis-retinol, a reaction catalyzed by LRAT. This is Retinoid isomerohydrolase (RPE65) from Canis lupus familiaris (Dog).